The primary structure comprises 565 residues: Genetic interactor of prohibitins 3, mitochondrial (565 aa).

The CP-type G domain occupies 129-315 (TDVLEKIPRG…IYDLPGFTTN (187 aa)).

It belongs to the TRAFAC class YlqF/YawG GTPase family. GEP3 subfamily.

It localises to the mitochondrion. May be involved in the mitochondrial lipid metabolism. The sequence is that of Genetic interactor of prohibitins 3, mitochondrial (GEP3) from Zygosaccharomyces rouxii (strain ATCC 2623 / CBS 732 / NBRC 1130 / NCYC 568 / NRRL Y-229).